Reading from the N-terminus, the 92-residue chain is N(2)-fixation sustaining protein CowN (92 aa).

This sequence belongs to the CowN family.

In terms of biological role, is required to sustain N(2)-dependent growth in the presence of low levels of carbon monoxide (CO). Probably acts by protecting the N(2) fixation ability of the nitrogenase complex, which is inactivated in the presence of CO. This is N(2)-fixation sustaining protein CowN from Cereibacter sphaeroides (strain ATCC 17025 / ATH 2.4.3) (Rhodobacter sphaeroides).